The chain runs to 541 residues: Exopolysaccharide phosphotransferase SCO6021 (541 aa).

It belongs to the stealth family.

The protein is Exopolysaccharide phosphotransferase SCO6021 of Streptomyces coelicolor (strain ATCC BAA-471 / A3(2) / M145).